We begin with the raw amino-acid sequence, 132 residues long: Small ribosomal subunit protein uS11 (132 aa).

Belongs to the universal ribosomal protein uS11 family. In terms of assembly, part of the 30S ribosomal subunit. Interacts with proteins S7 and S18. Binds to IF-3.

Functionally, located on the platform of the 30S subunit, it bridges several disparate RNA helices of the 16S rRNA. Forms part of the Shine-Dalgarno cleft in the 70S ribosome. This chain is Small ribosomal subunit protein uS11, found in Clostridium kluyveri (strain NBRC 12016).